The sequence spans 50 residues: Nosiheptide precursor (50 aa).

A cross-link (thiazole-4-carboxylic acid (Ser-Cys)) is located at residues 38 to 39 (SC). Positions 38-46 (SCTTCECCC) form a cross-link, 3-hydroxypyridine-2,5-dicarboxylic acid (Ser-Cys) (with S-47). A cross-link (3-hydroxypyridine-2,5-dicarboxylic acid (Ser-Ser) (with C-46)) is located at residues 38-47 (SCTTCECCCS). The thiazole-4-carboxylic acid (Thr-Cys) cross-link spans 41–42 (TC). E43 bears the 4-hydroxyglutamate mark. A cross-link (thiazole-4-carboxylic acid (Glu-Cys)) is located at residues 43 to 44 (EC). Positions 43-45 (ECC) form a cross-link, 2-(cystein-S-ylcarbonyl)-3-methyl-4-(glutam-5-yloxy)methylindole (Glu-Cys). Residues 45–46 (CC) constitute a cross-link (thiazole-4-carboxylic acid (Cys-Cys)). Positions 47–48 (SC) form a cross-link, thiazole-4-carboxylic acid (Ser-Cys). S49 is subject to 2,3-didehydroalanine (Ser). Residue S49 is modified to Serine amide; atypical.

Belongs to the thiocillin family. Post-translationally, the amidation of Ser-49 is produced by the oxidative cleavage of Ser-50 rather than of a glycine, as in eukaryotes.

Its function is as follows. Inhibits bacterial protein biosynthesis by binding to ribosomes. Specifically, binds to the complex of 23S rRNA and ribosomal protein L11 (RPLK) in the 50S ribosomal subunit. While allowing a weak binding of elongation factor G (EF-G) to the ribosome and subsequent GTP-hydrolysis, probably impairs conformational changes in both the ribosome and EF-G which are necessary for translocation. In vitro, inhibits Gram-positive bacteria S.aureus strain 209P (MIC=0.0009 ug/ml), S.aureus strain 133 (MIC=0.0019 ug/ml), S.aureus strain B3 (MIC=0.003 ug/ml), S.aureus strain Hb (MIC=0.003 ug/ml), M.citreus strain ATCC 8411 (MIC=0.0038 ug/ml), M.lysodeikticus strain ATCC 4698 (MIC=0.003 ug/ml), S.lutea strain ATCC 9341 (MIC=0.0011 ug/ml), S.faecalis strain ATCC 9790 (MIC=0.0007 ug/ml), S.viridans (MIC=0.0065 ug/ml), S.pyogenes hemolyticus strain Dig7 (MIC=0.00028 ug/ml), D.pneumoniae strain Til (MIC=0.00015 ug/ml), N.catrrhalis (MIC=0.0017 ug/ml), L.casei strain ATCC 6633 (MIC=0.003 ug/ml), B.cereus strain ATCC 6630 (MIC=0.0071 ug/ml) and various isolates of L.monocytogenes. In vitro, inhibits Gram-negative bacterium P.multocida strain A125 (MIC=0.0024 ug/ml) but not M.smegmatis strain ATCC 6630, S.typhimurium, A.aerogenes strain ATCC 8308, P.vulgaris, K.pneumoniae strain ATCC 10031, S.marcescens strain A476, P.aeruginosa strain Bass or B.bronchiseptica strain CN387. Does not inhibit Gram-negative bacterium E.coli strain ATCC 9637 but does inhibit purified ribosomes from E.coli. In vivo, has no systemic effect in mice infected with staphylococci or streptococci when applied orally or subcutaneously. Has a local effect in mice infected subcutaneously or intraperitoneally with staphylococci when applied immediately afterwards. Is not toxic to mice. This is Nosiheptide precursor from Streptomyces actuosus.